Here is a 130-residue protein sequence, read N- to C-terminus: S-protein homolog 22 (130 aa).

The signal sequence occupies residues 1–21 (MKYFTIFFIFFSLCMFGHVSG).

This sequence belongs to the plant self-incompatibility (S1) protein family.

The protein localises to the secreted. The polypeptide is S-protein homolog 22 (Arabidopsis thaliana (Mouse-ear cress)).